A 258-amino-acid chain; its full sequence is UPF0246 protein YaaA (258 aa).

This sequence belongs to the UPF0246 family.

The protein is UPF0246 protein YaaA of Escherichia coli O6:K15:H31 (strain 536 / UPEC).